A 32-amino-acid chain; its full sequence is ATP synthase subunit O, mitochondrial (32 aa).

Belongs to the ATPase delta chain family. As to quaternary structure, F-type ATPases have 2 components, CF(1) - the catalytic core - and CF(0) - the membrane proton channel. CF(1) has five subunits: alpha(3), beta(3), gamma(1), delta(1), epsilon(1). CF(0) has three main subunits: a, b and c.

The protein resides in the mitochondrion. The protein localises to the mitochondrion inner membrane. Mitochondrial membrane ATP synthase (F(1)F(0) ATP synthase or Complex V) produces ATP from ADP in the presence of a proton gradient across the membrane which is generated by electron transport complexes of the respiratory chain. F-type ATPases consist of two structural domains, F(1) - containing the extramembraneous catalytic core and F(0) - containing the membrane proton channel, linked together by a central stalk and a peripheral stalk. During catalysis, ATP synthesis in the catalytic domain of F(1) is coupled via a rotary mechanism of the central stalk subunits to proton translocation. Part of the complex F(0) domain and the peripheric stalk, which acts as a stator to hold the catalytic alpha(3)beta(3) subcomplex and subunit a/ATP6 static relative to the rotary elements. The chain is ATP synthase subunit O, mitochondrial from Spinacia oleracea (Spinach).